Consider the following 713-residue polypeptide: Protein tyrosine phosphatase domain-containing protein 1 (713 aa).

In terms of domain architecture, Tyrosine-protein phosphatase spans 80–251; it reads YSSWITDHLL…LVPLRSVFSC (172 aa). The Phosphocysteine intermediate role is filled by Cys-188.

The protein belongs to the protein-tyrosine phosphatase family. Non-receptor class PTPDC1 subfamily.

May play roles in cilia formation and/or maintenance. This is Protein tyrosine phosphatase domain-containing protein 1 (ptpdc1) from Danio rerio (Zebrafish).